The primary structure comprises 176 residues: Phosphopantetheine adenylyltransferase (176 aa).

Thr-11 lines the substrate pocket. Residues 11-12 and His-19 contribute to the ATP site; that span reads TF. Residues Lys-43, Leu-93, and Arg-107 each contribute to the substrate site. ATP contacts are provided by residues Glu-117 and 141–147; that span reads LSVVSSS.

The protein belongs to the bacterial CoaD family. As to quaternary structure, homohexamer. Mg(2+) serves as cofactor.

Its subcellular location is the cytoplasm. It carries out the reaction (R)-4'-phosphopantetheine + ATP + H(+) = 3'-dephospho-CoA + diphosphate. Its pathway is cofactor biosynthesis; coenzyme A biosynthesis; CoA from (R)-pantothenate: step 4/5. Functionally, reversibly transfers an adenylyl group from ATP to 4'-phosphopantetheine, yielding dephospho-CoA (dPCoA) and pyrophosphate. The chain is Phosphopantetheine adenylyltransferase from Tropheryma whipplei (strain TW08/27) (Whipple's bacillus).